A 334-amino-acid chain; its full sequence is tRNA uridine(34) hydroxylase (334 aa).

The Rhodanese domain occupies 123 to 217 (SDPDVILVDT…YLEEVKAEES (95 aa)). C177 serves as the catalytic Cysteine persulfide intermediate.

The protein belongs to the TrhO family.

The enzyme catalyses uridine(34) in tRNA + AH2 + O2 = 5-hydroxyuridine(34) in tRNA + A + H2O. Its function is as follows. Catalyzes oxygen-dependent 5-hydroxyuridine (ho5U) modification at position 34 in tRNAs. This Shewanella baltica (strain OS185) protein is tRNA uridine(34) hydroxylase.